The primary structure comprises 380 residues: Tubulin alpha chain (380 aa).

Glu46, Ser115, Gly119, Thr120, Thr154, Asn181, and Asn202 together coordinate GTP. Glu46 is a binding site for Mg(2+). Glu228 is an active-site residue.

It belongs to the tubulin family. Dimer of alpha and beta chains. A typical microtubule is a hollow water-filled tube with an outer diameter of 25 nm and an inner diameter of 15 nM. Alpha-beta heterodimers associate head-to-tail to form protofilaments running lengthwise along the microtubule wall with the beta-tubulin subunit facing the microtubule plus end conferring a structural polarity. Microtubules usually have 13 protofilaments but different protofilament numbers can be found in some organisms and specialized cells. Requires Mg(2+) as cofactor.

Its subcellular location is the cytoplasm. It is found in the cytoskeleton. It catalyses the reaction GTP + H2O = GDP + phosphate + H(+). Functionally, tubulin is the major constituent of microtubules, a cylinder consisting of laterally associated linear protofilaments composed of alpha- and beta-tubulin heterodimers. Microtubules grow by the addition of GTP-tubulin dimers to the microtubule end, where a stabilizing cap forms. Below the cap, tubulin dimers are in GDP-bound state, owing to GTPase activity of alpha-tubulin. This chain is Tubulin alpha chain (TUB1), found in Encephalitozoon hellem (Microsporidian parasite).